Reading from the N-terminus, the 325-residue chain is Melanocortin receptor 5 (325 aa).

Residues 1–37 lie on the Extracellular side of the membrane; sequence MNSSSTLTVLNLTLNASEDGILGSNVKNKSLACEEMG. 4 N-linked (GlcNAc...) asparagine glycosylation sites follow: Asn-2, Asn-11, Asn-15, and Asn-28. The helical transmembrane segment at 38–61 threads the bilayer; sequence IAVEVFLTLGLVSLLENILVIGAI. The Cytoplasmic portion of the chain corresponds to 62–73; it reads VKNKNLHSPMYF. A helical membrane pass occupies residues 74–97; that stretch reads FVGSLAVADMLVSMSNAWETVTIY. Residues 98–114 are Extracellular-facing; it reads LLNNKHLVIADTFVRHI. A helical membrane pass occupies residues 115 to 138; that stretch reads DNVFDSMICISVVASMCSLLAIAV. Residues 139–155 are Cytoplasmic-facing; that stretch reads DRYITIFYALRYHHIMT. The chain crosses the membrane as a helical span at residues 156 to 179; it reads ARRSGVIIACIWTFCISCGIVFII. The Extracellular portion of the chain corresponds to 180–186; sequence YYESKYV. A helical membrane pass occupies residues 187 to 211; the sequence is IICLISMFFTMLFFMVSLYIHMFLL. Over 212–239 the chain is Cytoplasmic; that stretch reads ARNHVKRIAASPRYNSVRQRTSMKGAIT. Residues 240-265 form a helical membrane-spanning segment; that stretch reads LTMLLGIFIVCWSPFFLHLILMISCP. Over 266-273 the chain is Extracellular; sequence QNVYCSCF. Residues 274–297 traverse the membrane as a helical segment; the sequence is MSYFNMYLILIMCNSVIDPLIYAL. Over 298–325 the chain is Cytoplasmic; it reads RSQEMRRTFKEIVCCHGFRRPCRLLGGY. 2 S-palmitoyl cysteine lipidation sites follow: Cys-311 and Cys-312.

It belongs to the G-protein coupled receptor 1 family. As to expression, skin, adrenal gland, skeletal muscle, bone marrow, spleen, thymus, gonads, uterus and brain.

The protein resides in the cell membrane. Receptor for MSH (alpha, beta and gamma) and ACTH. The activity of this receptor is mediated by G proteins which activate adenylate cyclase. This receptor is a possible mediator of the immunomodulation properties of melanocortins. The polypeptide is Melanocortin receptor 5 (Mc5r) (Mus musculus (Mouse)).